A 492-amino-acid chain; its full sequence is MDPYKHRPTSGANSAYWTTNSGAPVWNNNNALTVGHRGPILLEDYHLIEKLAQFDRERIPERVVHARGASAKGFFEVTHDVSQLTCADFLRAPGVQTPVIVRFSTVVHERGSPETLRDPRGFAVKFYTREGNFDLVGNNMPVFFIRDGMKFPDMVHAFKPSPKTNMQENWRVVDFFSHHPESLHMFTFLFDDVGIPLNYRHMDGFGVNTYTLISRDGKAHLVKFHWKPTCGVKCLLDDEAVTVGGTCHTHATKDLTDSIAAGNYPEWKLFIQTIDADHEDRFDFDPLDVTKTWPEDIIPLQPVGRMVLNKNIDNFFAENEQLAFCPAVTVPGIHYSDDKLLQTRIFSYADTQRHRLGPNYLMLPVNAPKCAHHNNHHDGLMNFIHRDEEVNYFPSRFDPTRHAEKYPMPPRVLSGCREKCIIDKENNFKQAGERYRSFDPARQDRFLQRWVDALTDARVTHEIQSIWVSYWSQCDASLGQKLASRLKIKPNM.

Residues His-65 and Asn-138 contribute to the active site. Heme is bound at residue Tyr-348.

This sequence belongs to the catalase family. As to quaternary structure, homotetramer. Heme is required as a cofactor. In whole endosperms (aleurones plus starchy endosperm), in isolated aleurones and in developing seeds.

It is found in the peroxisome. The protein resides in the glyoxysome. It carries out the reaction 2 H2O2 = O2 + 2 H2O. Its function is as follows. Occurs in almost all aerobically respiring organisms and serves to protect cells from the toxic effects of hydrogen peroxide. This chain is Catalase isozyme 1 (CAT1), found in Hordeum vulgare (Barley).